We begin with the raw amino-acid sequence, 219 residues long: MIKLTARQEQILNLIRDAIENTGFPPTRAEIAAELGFRSANAAEEHLQALARKGAIEISPGTSRGIRLRDMGGTRSDRSGAQLSLPHPALMQLNLPLVGRVAAGSPILAQEHIEATYNVDKSLFSAKPDFLLKVRGMSMRDAGILDGDLLAVKKIDSAKNGQIVVARLGDDVTVKRYKKTGSLIELLPENPDFQPIRVDLEHDDFALEGLAVGLMRTWN.

The segment at residues 28–48 (RAEIAAELGFRSANAAEEHLQ) is a DNA-binding region (H-T-H motif). Active-site for autocatalytic cleavage activity residues include S138 and K175.

Belongs to the peptidase S24 family. Homodimer.

The enzyme catalyses Hydrolysis of Ala-|-Gly bond in repressor LexA.. In terms of biological role, represses a number of genes involved in the response to DNA damage (SOS response), including recA and lexA. In the presence of single-stranded DNA, RecA interacts with LexA causing an autocatalytic cleavage which disrupts the DNA-binding part of LexA, leading to derepression of the SOS regulon and eventually DNA repair. This Herminiimonas arsenicoxydans protein is LexA repressor.